A 414-amino-acid chain; its full sequence is 3-oxoacyl-[acyl-carrier-protein] synthase 2 (414 aa).

Residues 3–411 (KRRVVITGLG…GTNGTLVLSR (409 aa)) form the Ketosynthase family 3 (KS3) domain. Catalysis depends on for beta-ketoacyl synthase activity residues C164, H304, and H341.

It belongs to the thiolase-like superfamily. Beta-ketoacyl-ACP synthases family. Homodimer.

The enzyme catalyses a fatty acyl-[ACP] + malonyl-[ACP] + H(+) = a 3-oxoacyl-[ACP] + holo-[ACP] + CO2. It carries out the reaction (9Z)-hexadecenoyl-[ACP] + malonyl-[ACP] + H(+) = 3-oxo-(11Z)-octadecenoyl-[ACP] + holo-[ACP] + CO2. Its pathway is lipid metabolism; fatty acid biosynthesis. In terms of biological role, involved in the type II fatty acid elongation cycle. Catalyzes the elongation of a wide range of acyl-ACP by the addition of two carbons from malonyl-ACP to an acyl acceptor. Can efficiently catalyze the conversion of palmitoleoyl-ACP (cis-hexadec-9-enoyl-ACP) to cis-vaccenoyl-ACP (cis-octadec-11-enoyl-ACP), an essential step in the thermal regulation of fatty acid composition. In Coxiella burnetii (strain RSA 493 / Nine Mile phase I), this protein is 3-oxoacyl-[acyl-carrier-protein] synthase 2 (fabF).